A 97-amino-acid chain; its full sequence is Putative septation protein SpoVG (97 aa).

The protein belongs to the SpoVG family.

Essential for sporulation. Interferes with or is a negative regulator of the pathway leading to asymmetric septation. The polypeptide is Putative septation protein SpoVG (Bacillus cereus (strain 03BB102)).